Consider the following 677-residue polypeptide: MTQVAKKILVTCALPYANGSIHLGHMLEHIQADVWVRYQRMRGHEVNFICADDAHGTPIMLKAQQLGITPEQMIGEMSQEHQTDFAGFNISYDNYHSTHSEENRQLSELIYSRLKENGFIKNRTISQLYDPEKGMFLPDRFVKGTCPKCKSPDQYGDNCEVCGATYSPTELIEPKSVVSGATPVMRDSEHFFFDLPSFSEMLQAWTRSGALQEQVANKMQEWFESGLQQWDISRDAPYFGFEIPNAPGKYFYVWLDAPIGYMGSFKNLCDKRGDSVSFDEYWKKDSTAELYHFIGKDIVYFHSLFWPAMLEGSNFRKPTNLFVHGYVTVNGAKMSKSRGTFIKASTWLNHFDADSLRYYYTAKLSSRIDDIDLNLEDFVQRVNADIVNKVVNLASRNAGFINKRFDGVLANELADPQLYKTFTDAAEVIGEAWESREFGKAVREIMALADLANRYVDEQAPWVVAKQEGRDADLQAICSMGINLFRVLMTYLKPVLPKLTERAEAFLNTELTWDGIQQPLLGHKVNPFKALYNRIDMKQVEALVEASKEEVKAAAAPVTGPLADDPIQETITFDDFAKVDLRVALIENAEFVEGSDKLLRLTLDLGGEKRNVFSGIRSAYPDPQALIGRHTIMVANLAPRKMRFGISEGMVMAAGPGGKDIFLLSPDAGAKPGHQVK.

A 'HIGH' region motif is present at residues 15–25 (PYANGSIHLGH). Cys-146, Cys-149, Cys-159, and Cys-162 together coordinate Zn(2+). The 'KMSKS' region motif lies at 333–337 (KMSKS). Lys-336 contributes to the ATP binding site. Residues 575 to 677 (DFAKVDLRVA…AGAKPGHQVK (103 aa)) form the tRNA-binding domain.

This sequence belongs to the class-I aminoacyl-tRNA synthetase family. MetG type 1 subfamily. As to quaternary structure, homodimer. It depends on Zn(2+) as a cofactor.

It localises to the cytoplasm. The catalysed reaction is tRNA(Met) + L-methionine + ATP = L-methionyl-tRNA(Met) + AMP + diphosphate. Its function is as follows. Is required not only for elongation of protein synthesis but also for the initiation of all mRNA translation through initiator tRNA(fMet) aminoacylation. In Escherichia coli (strain ATCC 8739 / DSM 1576 / NBRC 3972 / NCIMB 8545 / WDCM 00012 / Crooks), this protein is Methionine--tRNA ligase.